Consider the following 265-residue polypeptide: Small ribosomal subunit protein eS1 (265 aa).

The disordered stretch occupies residues 234–256 (EGSTTTSKGVTSEGGEKVDRVDG). Residues 247-256 (GGEKVDRVDG) are compositionally biased toward basic and acidic residues.

Belongs to the eukaryotic ribosomal protein eS1 family. In terms of assembly, component of the small ribosomal subunit. Mature ribosomes consist of a small (40S) and a large (60S) subunit. The 40S subunit contains about 33 different proteins and 1 molecule of RNA (18S). The 60S subunit contains about 49 different proteins and 3 molecules of RNA (28S, 5.8S and 5S).

Its subcellular location is the cytoplasm. The sequence is that of Small ribosomal subunit protein eS1 from Aplysia californica (California sea hare).